We begin with the raw amino-acid sequence, 599 residues long: Proteasome-associated ATPase (599 aa).

Residues 1-22 (MPHGHPGSQPDEGGELSNGSSS) are disordered. The stretch at 21–97 (SSGELTAQIR…LREEVDRLAQ (77 aa)) forms a coiled coil. 286 to 291 (GCGKTL) provides a ligand contact to ATP. A docks into pockets in the proteasome alpha-ring region spans residues 598–599 (YL).

Belongs to the AAA ATPase family. Homohexamer. Assembles into a hexameric ring structure that caps the 20S proteasome core. Strongly interacts with the prokaryotic ubiquitin-like protein Pup through a hydrophobic interface; the interacting region of ARC lies in its N-terminal coiled-coil domain. There is one Pup binding site per ARC hexamer ring. Upon ATP-binding, the C-terminus of ARC interacts with the alpha-rings of the proteasome core, possibly by binding to the intersubunit pockets.

The protein operates within protein degradation; proteasomal Pup-dependent pathway. ATPase which is responsible for recognizing, binding, unfolding and translocation of pupylated proteins into the bacterial 20S proteasome core particle. May be essential for opening the gate of the 20S proteasome via an interaction with its C-terminus, thereby allowing substrate entry and access to the site of proteolysis. Thus, the C-termini of the proteasomal ATPase may function like a 'key in a lock' to induce gate opening and therefore regulate proteolysis. This is Proteasome-associated ATPase from Actinosynnema mirum (strain ATCC 29888 / DSM 43827 / JCM 3225 / NBRC 14064 / NCIMB 13271 / NRRL B-12336 / IMRU 3971 / 101).